We begin with the raw amino-acid sequence, 237 residues long: LexA repressor (237 aa).

Polar residues predominate over residues 1–12 (MPVKDSSSNKKN). The tract at residues 1 to 20 (MPVKDSSSNKKNQIGKLSER) is disordered. A DNA-binding region (H-T-H motif) is located at residues 41-61 (IREIGDAAGLQSTSSVAYQLK). The segment covering 67 to 80 (GYLRRDPNKPRAVD) has biased composition (basic and acidic residues). The segment at 67-112 (GYLRRDPNKPRAVDVRALPDPIPSKPGRKPGPKKSSVAISPDPAET) is disordered. Active-site for autocatalytic cleavage activity residues include Ser161 and Lys198.

The protein belongs to the peptidase S24 family. Homodimer.

The catalysed reaction is Hydrolysis of Ala-|-Gly bond in repressor LexA.. Its function is as follows. Represses a number of genes involved in the response to DNA damage (SOS response), including recA and lexA. In the presence of single-stranded DNA, RecA interacts with LexA causing an autocatalytic cleavage which disrupts the DNA-binding part of LexA, leading to derepression of the SOS regulon and eventually DNA repair. The sequence is that of LexA repressor from Corynebacterium diphtheriae (strain ATCC 700971 / NCTC 13129 / Biotype gravis).